The sequence spans 276 residues: Large ribosomal subunit protein uL2 (276 aa).

2 disordered regions span residues 1-20 and 219-276; these read MGIK…TTND and TVRG…RRKK. Residues 7 to 20 are compositionally biased toward polar residues; that stretch reads NPTTNGRRNMTTND.

Belongs to the universal ribosomal protein uL2 family. In terms of assembly, part of the 50S ribosomal subunit. Forms a bridge to the 30S subunit in the 70S ribosome.

In terms of biological role, one of the primary rRNA binding proteins. Required for association of the 30S and 50S subunits to form the 70S ribosome, for tRNA binding and peptide bond formation. It has been suggested to have peptidyltransferase activity; this is somewhat controversial. Makes several contacts with the 16S rRNA in the 70S ribosome. This Bacillus cereus (strain Q1) protein is Large ribosomal subunit protein uL2.